Reading from the N-terminus, the 272-residue chain is Dermonecrotic toxin LvSicTox-alphaIC1bv (272 aa).

The active site involves His5. Residues Glu25 and Asp27 each coordinate Mg(2+). Catalysis depends on His41, which acts as the Nucleophile. 2 disulfides stabilise this stretch: Cys45-Cys51 and Cys47-Cys189. Position 84 (Asp84) interacts with Mg(2+).

It belongs to the arthropod phospholipase D family. Class II subfamily. Mg(2+) is required as a cofactor. Expressed by the venom gland.

Its subcellular location is the secreted. The catalysed reaction is an N-(acyl)-sphingosylphosphocholine = an N-(acyl)-sphingosyl-1,3-cyclic phosphate + choline. It carries out the reaction an N-(acyl)-sphingosylphosphoethanolamine = an N-(acyl)-sphingosyl-1,3-cyclic phosphate + ethanolamine. It catalyses the reaction a 1-acyl-sn-glycero-3-phosphocholine = a 1-acyl-sn-glycero-2,3-cyclic phosphate + choline. The enzyme catalyses a 1-acyl-sn-glycero-3-phosphoethanolamine = a 1-acyl-sn-glycero-2,3-cyclic phosphate + ethanolamine. Its function is as follows. Dermonecrotic toxins cleave the phosphodiester linkage between the phosphate and headgroup of certain phospholipids (sphingolipid and lysolipid substrates), forming an alcohol (often choline) and a cyclic phosphate. This toxin acts on sphingomyelin (SM). It may also act on ceramide phosphoethanolamine (CPE), lysophosphatidylcholine (LPC) and lysophosphatidylethanolamine (LPE), but not on lysophosphatidylserine (LPS), and lysophosphatidylglycerol (LPG). It acts by transphosphatidylation, releasing exclusively cyclic phosphate products as second products. Induces dermonecrosis, hemolysis, increased vascular permeability, edema, inflammatory response, and platelet aggregation. In Loxosceles variegata (Recluse spider), this protein is Dermonecrotic toxin LvSicTox-alphaIC1bv.